The following is a 188-amino-acid chain: Elongation factor P (188 aa).

The protein belongs to the elongation factor P family.

It is found in the cytoplasm. Its pathway is protein biosynthesis; polypeptide chain elongation. Involved in peptide bond synthesis. Stimulates efficient translation and peptide-bond synthesis on native or reconstituted 70S ribosomes in vitro. Probably functions indirectly by altering the affinity of the ribosome for aminoacyl-tRNA, thus increasing their reactivity as acceptors for peptidyl transferase. The protein is Elongation factor P of Rhodopseudomonas palustris (strain BisA53).